The sequence spans 147 residues: Spermidine export protein MdtJ (147 aa).

Helical transmembrane passes span 1-21 (MIYWIFLGLAIIAEIIGTLSM), 31-51 (TGHIVMYFMITGSYVMLSLAV), 54-74 (VALGVAYALWEGIGILIITIF), and 81-101 (ETLSPLKIAGLVTLIGGILLV). The interval 105–147 (TRKPKQPNCHRGNRPPSVQELKTQTTGHHKGVAVESGEHHAAA) is disordered.

It belongs to the drug/metabolite transporter (DMT) superfamily. Small multidrug resistance (SMR) (TC 2.A.7.1) family. MdtJ subfamily. Forms a complex with MdtI.

The protein localises to the cell inner membrane. Functionally, catalyzes the excretion of spermidine. This Yersinia pestis bv. Antiqua (strain Antiqua) protein is Spermidine export protein MdtJ.